We begin with the raw amino-acid sequence, 728 residues long: Procollagen-lysine,2-oxoglutarate 5-dioxygenase 1 (728 aa).

The signal sequence occupies residues 1-18 (MRSLLLLASLAWLLLAQA). N-linked (GlcNAc...) asparagine glycosylation is found at Asn-177, Asn-198, and Asn-539. One can recognise a Fe2OG dioxygenase domain in the interval 637–728 (QFDLAFVVRY…RYIAVSFVDP (92 aa)). Residues His-657 and Asp-659 each coordinate Fe cation. Asn-687 carries N-linked (GlcNAc...) asparagine glycosylation. Residue His-709 coordinates Fe cation. The active site involves Arg-719.

As to quaternary structure, homodimer. Identified in a complex with P3H3 and P3H4. Fe(2+) serves as cofactor. The cofactor is L-ascorbate.

It localises to the rough endoplasmic reticulum membrane. The catalysed reaction is L-lysyl-[collagen] + 2-oxoglutarate + O2 = (5R)-5-hydroxy-L-lysyl-[collagen] + succinate + CO2. Part of a complex composed of PLOD1, P3H3 and P3H4 that catalyzes hydroxylation of lysine residues in collagen alpha chains and is required for normal assembly and cross-linkling of collagen fibrils. Forms hydroxylysine residues in -Xaa-Lys-Gly- sequences in collagens. These hydroxylysines serve as sites of attachment for carbohydrate units and are essential for the stability of the intermolecular collagen cross-links. The protein is Procollagen-lysine,2-oxoglutarate 5-dioxygenase 1 (Plod1) of Rattus norvegicus (Rat).